Consider the following 53-residue polypeptide: Non-classical export protein 1 (53 aa).

Residues 7–29 (FLLGKFSDPLLAIMVGCLSYYVY) traverse the membrane as a helical segment.

The protein belongs to the NCE101 family.

The protein localises to the membrane. Functionally, involved in a novel pathway of export of proteins that lack a cleavable signal sequence. May be part of the export machinery or may also be a substrate for non-classical export. This is Non-classical export protein 1 (NCE101) from Saccharomyces cerevisiae (strain ATCC 204508 / S288c) (Baker's yeast).